The primary structure comprises 413 residues: Pyruvate dehydrogenase complex subunit homolog DDB_G0271564, mitochondrial (413 aa).

A mitochondrion-targeting transit peptide spans 1–19; sequence MNRILKQVSNTKGKGIRFY. Positions 29–67 constitute a Peripheral subunit-binding (PSBD) domain; the sequence is YMFPSVRRLLVEYGINSSKEVTATGPQNRLLKGDVLAYI.

This sequence belongs to the 2-oxoacid dehydrogenase family.

Its subcellular location is the mitochondrion. In terms of biological role, the pyruvate dehydrogenase complex catalyzes the overall conversion of pyruvate to acetyl-CoA and CO(2). It contains multiple copies of three enzymatic components: pyruvate dehydrogenase (E1), dihydrolipoamide acetyltransferase (E2) and lipoamide dehydrogenase (E3). This chain is Pyruvate dehydrogenase complex subunit homolog DDB_G0271564, mitochondrial (pdhX), found in Dictyostelium discoideum (Social amoeba).